A 176-amino-acid polypeptide reads, in one-letter code: Transcription factor E (176 aa).

The HTH TFE/IIEalpha-type domain occupies 5 to 89 (IDQLMKDMAR…YWKANVDQIN (85 aa)).

Belongs to the TFE family. Monomer. Interaction with RNA polymerase subunits RpoF and RpoE is necessary for Tfe stimulatory transcription activity. Able to interact with Tbp and RNA polymerase in the absence of DNA promoter. Interacts both with the preinitiation and elongation complexes.

Its function is as follows. Transcription factor that plays a role in the activation of archaeal genes transcribed by RNA polymerase. Facilitates transcription initiation by enhancing TATA-box recognition by TATA-box-binding protein (Tbp), and transcription factor B (Tfb) and RNA polymerase recruitment. Not absolutely required for transcription in vitro, but particularly important in cases where Tbp or Tfb function is not optimal. It dynamically alters the nucleic acid-binding properties of RNA polymerases by stabilizing the initiation complex and destabilizing elongation complexes. Seems to translocate with the RNA polymerase following initiation and acts by binding to the non template strand of the transcription bubble in elongation complexes. This chain is Transcription factor E, found in Metallosphaera sedula (strain ATCC 51363 / DSM 5348 / JCM 9185 / NBRC 15509 / TH2).